The chain runs to 204 residues: Protein PAXX (204 aa).

The region spanning 37-79 (FNLYVTDAAELWSTCFTPDSLAALKARFGLSAAEDITPRFRAA) is the PISA domain. Ser-134 bears the Phosphoserine mark. The segment at 143–204 (EETAVSPRKS…PAGGVDFDET (62 aa)) is disordered. A Phosphothreonine modification is found at Thr-145. Phosphoserine occurs at positions 148 and 152. The mediates interaction with XRCC5/Ku80 and XRCC6/Ku70 and association with the non-homologous end joining core complex stretch occupies residues 171-204 (GPGPGVRRRCPGESLINPGFKSKKPAGGVDFDET). Positions 190–204 (FKSKKPAGGVDFDET) match the XLM motif.

The protein belongs to the XRCC4-XLF family. PAXX subfamily. In terms of assembly, homodimer. Interacts with the DNA-bound XRCC5/Ku80 and XRCC6/Ku70 heterodimer (Ku complex); the interaction is direct. Associated component of the non-homologous end joining (NHEJ) complex, composed of the core proteins PRKDC, LIG4, XRCC4, XRCC6/Ku70, XRCC5/Ku86 and NHEJ1/XLF. Interacts with POLL (DNA polymerase lambda); promoting POLL recruitment to double-strand breaks (DSBs) and stimulation of the end-filling activity of POLL. Phosphorylation may inhibit interaction with the DNA-bound XRCC5/Ku80 and XRCC6/Ku70 heterodimer (Ku complex).

It localises to the nucleus. The protein localises to the chromosome. The protein resides in the cytoplasm. Its function is as follows. Non-essential DNA repair protein involved in DNA non-homologous end joining (NHEJ); participates in double-strand break (DSB) repair and V(D)J recombination. May act as a scaffold required for accumulation of the Ku heterodimer, composed of XRCC5/Ku80 and XRCC6/Ku70, at double-strand break sites and promote the assembly and/or stability of the NHEJ machinery. Involved in NHEJ by promoting the ligation of blunt-ended DNA ends. Together with NHEJ1/XLF, collaborates with DNA polymerase lambda (POLL) to promote joining of non-cohesive DNA ends. Constitutes a non-essential component of classical NHEJ: has a complementary but distinct function with NHEJ1/XLF in DNA repair. Able to restrict infection by herpesvirus 1 (HSV-1) via an unknown mechanism. This Homo sapiens (Human) protein is Protein PAXX.